Reading from the N-terminus, the 1226-residue chain is uncharacterized protein (1226 aa).

It belongs to the Mg-chelatase subunit H family.

This is an uncharacterized protein from Methanocaldococcus jannaschii (strain ATCC 43067 / DSM 2661 / JAL-1 / JCM 10045 / NBRC 100440) (Methanococcus jannaschii).